Consider the following 116-residue polypeptide: RNA guanine-N7 methyltransferase activating subunit (116 aa).

Positions 1 to 55 (MAEALGAQELYEKMFEQRFTANDKEYQEYLKREQDQPPIVEDWKMGNQRNTDRYR) are interaction with RNMT. A disordered region spans residues 31–116 (KREQDQPPIV…SNQRFHSDRY (86 aa)). Residues 36–42 (QPPIVED) carry the RNMT-activating domain motif. The interval 56–116 (DNRHHRGWDG…SNQRFHSDRY (61 aa)) is RNA-binding. Positions 67–78 (QNWSSNSYNQSY) are enriched in low complexity. Residues 97-110 (YQQGHYTHNPSNQR) are compositionally biased toward polar residues.

The protein belongs to the RAM family.

It localises to the nucleus. Regulatory subunit of the mRNA-capping methyltransferase RNMT:RAMAC complex that methylates the N7 position of the added guanosine to the 5'-cap structure of mRNAs. Promotes the recruitment of the methyl donor, S-adenosyl-L-methionine, to RNMT. Regulates RNMT expression by a post-transcriptional stabilizing mechanism. Binds RNA. The sequence is that of RNA guanine-N7 methyltransferase activating subunit (ramac) from Xenopus tropicalis (Western clawed frog).